A 644-amino-acid chain; its full sequence is Core protein VP4 (644 aa).

It belongs to the orbivirus VP4 family.

It is found in the virion. Its function is as follows. The VP4 protein is one of the five proteins (with VP1, VP3, VP6 and VP7) which form the inner capsid of the virus. The polypeptide is Core protein VP4 (Segment-4) (Bluetongue virus 2 (isolate USA) (BTV 2)).